The following is a 256-amino-acid chain: uncharacterized protein (256 aa).

The HTH deoR-type domain maps to 7–62; it reads PAERQKTLLNLISKQSVISINNLVNILGVSHMTVRRDIQKLEEDGKVISVSGGVQL. The segment at residues 24 to 43 is a DNA-binding region (H-T-H motif); it reads ISINNLVNILGVSHMTVRRD.

This is an uncharacterized protein from Haemophilus influenzae (strain ATCC 51907 / DSM 11121 / KW20 / Rd).